A 139-amino-acid chain; its full sequence is Arsenate reductase (139 aa).

Residues cysteine 10, cysteine 82, and cysteine 89 each act as nucleophile in the active site. Disulfide bonds link cysteine 10–cysteine 82 and cysteine 82–cysteine 89.

Belongs to the low molecular weight phosphotyrosine protein phosphatase family. Thioredoxin-coupled ArsC subfamily.

The protein localises to the cytoplasm. The catalysed reaction is arsenate + [thioredoxin]-dithiol + H(+) = arsenite + [thioredoxin]-disulfide + H2O. In terms of biological role, catalyzes the reduction of arsenate [As(V)] to arsenite [As(III)]. The sequence is that of Arsenate reductase from Bacillus licheniformis (strain ATCC 14580 / DSM 13 / JCM 2505 / CCUG 7422 / NBRC 12200 / NCIMB 9375 / NCTC 10341 / NRRL NRS-1264 / Gibson 46).